Consider the following 483-residue polypeptide: Succinate semialdehyde dehydrogenase (483 aa).

NAD(+) contacts are provided by residues 156–157 (WN), 180–183 (KPAP), and 233–234 (GS). The active-site Proton acceptor is Glu255. An NAD(+)-binding site is contributed by Leu256. Cys289 functions as the Nucleophile in the catalytic mechanism. Glu386 contacts NAD(+).

Belongs to the aldehyde dehydrogenase family. As to quaternary structure, homotetramer.

It carries out the reaction succinate semialdehyde + NAD(+) + H2O = succinate + NADH + 2 H(+). In terms of biological role, involved in the degradation of the pyridine ring of trigonelline (TG; N-methylnicotinate) into succinate and methylamine as carbon and nitrogen sources, respectively. Catalyzes the NAD(+)-dependent oxidation of succinate semialdehyde to succinate. The chain is Succinate semialdehyde dehydrogenase from Acinetobacter baylyi (strain ATCC 33305 / BD413 / ADP1).